Consider the following 232-residue polypeptide: Ion-translocating oxidoreductase complex subunit E (232 aa).

The next 6 helical transmembrane spans lie at 12 to 31 (LWRN…LLAV), 39 to 59 (LGLG…VSAL), 69 to 89 (IPIY…LINA), 92 to 112 (FGLY…CIVI), 125 to 145 (ALAA…LLLL), and 182 to 202 (PFLL…MLVG).

The protein belongs to the NqrDE/RnfAE family. The complex is composed of six subunits: RnfA, RnfB, RnfC, RnfD, RnfE and RnfG.

The protein resides in the cell inner membrane. In terms of biological role, part of a membrane-bound complex that couples electron transfer with translocation of ions across the membrane. In Sodalis glossinidius (strain morsitans), this protein is Ion-translocating oxidoreductase complex subunit E.